Here is a 406-residue protein sequence, read N- to C-terminus: Cytochrome bc1 complex Rieske iron-sulfur subunit (406 aa).

The next 3 helical transmembrane spans lie at 56-76 (VGIWFGIGIVSALAFLAVYLF), 98-118 (LLGLTSGLAILSLGIGVIFYI), and 166-186 (MLGIGGVLAGLTIIAPLGGMV). In terms of domain architecture, Rieske spans 291–388 (HGPRNAVMLI…ITVDEEGYLV (98 aa)). [2Fe-2S] cluster-binding residues include Cys331, His333, Cys350, and His353. Cysteines 336 and 352 form a disulfide.

Belongs to the Rieske iron-sulfur protein family. The cytochrome bc1 complex is composed of a cytochrome b (QcrB), the Rieske iron-sulfur protein (QcrA) and a diheme cytochrome c (QcrC) subunit. The bc1 complex forms a supercomplex with cytochrome c oxidase (cytochrome aa3). It depends on [2Fe-2S] cluster as a cofactor.

The protein localises to the cell membrane. Its function is as follows. Iron-sulfur subunit of the cytochrome bc1 complex, an essential component of the respiratory electron transport chain required for ATP synthesis. The bc1 complex catalyzes the oxidation of menaquinol and the reduction of cytochrome c in the respiratory chain. The bc1 complex operates through a Q-cycle mechanism that couples electron transfer to generation of the proton gradient that drives ATP synthesis. This Corynebacterium diphtheriae (strain ATCC 700971 / NCTC 13129 / Biotype gravis) protein is Cytochrome bc1 complex Rieske iron-sulfur subunit (qcrA).